Consider the following 501-residue polypeptide: Lysine--tRNA ligase (501 aa).

Residues Glu411 and Glu418 each coordinate Mg(2+).

This sequence belongs to the class-II aminoacyl-tRNA synthetase family. In terms of assembly, homodimer. Mg(2+) is required as a cofactor.

The protein resides in the cytoplasm. The enzyme catalyses tRNA(Lys) + L-lysine + ATP = L-lysyl-tRNA(Lys) + AMP + diphosphate. This chain is Lysine--tRNA ligase, found in Clostridium perfringens (strain ATCC 13124 / DSM 756 / JCM 1290 / NCIMB 6125 / NCTC 8237 / Type A).